Reading from the N-terminus, the 441-residue chain is Glutamate-1-semialdehyde 2,1-aminomutase (441 aa).

N6-(pyridoxal phosphate)lysine is present on lysine 279.

It belongs to the class-III pyridoxal-phosphate-dependent aminotransferase family. HemL subfamily. As to quaternary structure, homodimer. Pyridoxal 5'-phosphate is required as a cofactor.

Its subcellular location is the cytoplasm. It carries out the reaction (S)-4-amino-5-oxopentanoate = 5-aminolevulinate. Its pathway is porphyrin-containing compound metabolism; protoporphyrin-IX biosynthesis; 5-aminolevulinate from L-glutamyl-tRNA(Glu): step 2/2. The sequence is that of Glutamate-1-semialdehyde 2,1-aminomutase from Leptospira borgpetersenii serovar Hardjo-bovis (strain JB197).